We begin with the raw amino-acid sequence, 441 residues long: Transducin-like enhancer protein 7 (441 aa).

2 disordered regions span residues 1-77 (MSGE…QWHL) and 91-119 (PDAQ…SSSS). Low complexity predominate over residues 27 to 49 (ESSGVSSQPEPQVQQQLGSLLGV). Residues 62–76 (PADQETSTVTQQQWH) show a composition bias toward polar residues. Over residues 108 to 119 (GSEVGQPYSSSS) the composition is skewed to low complexity. WD repeat units follow at residues 156–194 (FHGK…AGEK), 204–243 (HPQD…QVRA), 247–285 (STGP…LIRK), 286–325 (HEVP…RLHQ), and 409–441 (EESS…QLLY).

The protein belongs to the WD repeat Groucho/TLE family.

This is Transducin-like enhancer protein 7 from Homo sapiens (Human).